The primary structure comprises 396 residues: Tryptophan synthase beta chain (396 aa).

At Lys-86 the chain carries N6-(pyridoxal phosphate)lysine.

It belongs to the TrpB family. Tetramer of two alpha and two beta chains. Requires pyridoxal 5'-phosphate as cofactor.

The catalysed reaction is (1S,2R)-1-C-(indol-3-yl)glycerol 3-phosphate + L-serine = D-glyceraldehyde 3-phosphate + L-tryptophan + H2O. It participates in amino-acid biosynthesis; L-tryptophan biosynthesis; L-tryptophan from chorismate: step 5/5. In terms of biological role, the beta subunit is responsible for the synthesis of L-tryptophan from indole and L-serine. The sequence is that of Tryptophan synthase beta chain from Aliivibrio fischeri (strain MJ11) (Vibrio fischeri).